Reading from the N-terminus, the 730-residue chain is Guanyl-specific ribonuclease pgl-1 (730 aa).

Residues 205-447 (KQLMLDGPKS…VTRIVESLEK (243 aa)) are involved in dimerization. The active-site Proton acceptor is the His437. Composition is skewed to polar residues over residues 452-472 (DTPS…QDSA) and 568-595 (DANQ…SPTK). Disordered regions lie at residues 452–475 (DTPS…AYTK), 567–639 (SDAN…TPMP), and 686–730 (GGRG…RGGF). The interval 674 to 730 (GGGRGGYGGGDRGGRGGYGGDRGGRGGYGGGDRGGRGGYGGDRGRGGYGGRGGRGGF) is RNA-binding RGG-box.

Homodimer. Interacts with pgl-2 and pgl-3; this association is not required for P-granule localization of either pgl-2 or pgl-3. Interacts with ife-1. Interacts with prmt-1; the interaction is direct. Interacts with nmad-1. Interacts with P granule components meg-1, meg-3 and meg-4. It depends on Does not require metal ions for catalytic activity. as a cofactor. Methylated at arginine residues in the RNA-binding RGG-box by prmt-1. Methylation promotes P-granule degradation by autophagy. Expressed in the germline. Expressed in most somatic cells.

It is found in the cytoplasmic granule. It catalyses the reaction [RNA] containing guanosine + H2O = an [RNA fragment]-3'-guanosine-3'-phosphate + a 5'-hydroxy-ribonucleotide-3'-[RNA fragment].. Not inhibited by RNase inhibitor RNasin. Functionally, guanyl-specific endoribonuclease which cleaves the phosphodiester bond in single-stranded RNA between the 3'-guanylic residue and the 5'-OH residue of adjacent nucleotide, resulting in the formation of a corresponding 2',3'-cyclic phosphate intermediate. Together with the P-granule component pgl-3, is involved in the formation of P-granules. Together with pgl-3, probably recruits other granule components such as pos-1, mex-3 and glh-1 to P-granules. In addition, may act redundantly with pgl-3 to protect germ cells from excessive germline apoptosis during normal oogenesis and development of the two gonadal arms. This may in part be through regulating the localization of sir-2.1 which is involved in germ cell apoptosis. May protect somatic cells from excessive apoptosis during normal development. Essential role in male and female postembryonic germline development; maternally provided protein maintains a population of proliferating germ cells and zygotic expression is required for correct oogenesis. In Caenorhabditis elegans, this protein is Guanyl-specific ribonuclease pgl-1.